We begin with the raw amino-acid sequence, 298 residues long: Thymidylate synthase (298 aa).

DUMP is bound by residues Arg25 and Arg159–Arg160. Residue Cys179 is the Nucleophile of the active site. DUMP contacts are provided by residues Arg200 to Asp203, Asn211, and His241 to Tyr243. Asp203 is a (6R)-5,10-methylene-5,6,7,8-tetrahydrofolate binding site. Position 297 (Ala297) interacts with (6R)-5,10-methylene-5,6,7,8-tetrahydrofolate.

It belongs to the thymidylate synthase family. Bacterial-type ThyA subfamily. In terms of assembly, homodimer.

It localises to the cytoplasm. The enzyme catalyses dUMP + (6R)-5,10-methylene-5,6,7,8-tetrahydrofolate = 7,8-dihydrofolate + dTMP. It functions in the pathway pyrimidine metabolism; dTTP biosynthesis. Functionally, catalyzes the reductive methylation of 2'-deoxyuridine-5'-monophosphate (dUMP) to 2'-deoxythymidine-5'-monophosphate (dTMP) while utilizing 5,10-methylenetetrahydrofolate (mTHF) as the methyl donor and reductant in the reaction, yielding dihydrofolate (DHF) as a by-product. This enzymatic reaction provides an intracellular de novo source of dTMP, an essential precursor for DNA biosynthesis. This chain is Thymidylate synthase, found in Cereibacter sphaeroides (strain ATCC 17023 / DSM 158 / JCM 6121 / CCUG 31486 / LMG 2827 / NBRC 12203 / NCIMB 8253 / ATH 2.4.1.) (Rhodobacter sphaeroides).